The chain runs to 418 residues: Glutamyl-tRNA reductase (418 aa).

Substrate-binding positions include 49–52, S107, 112–114, and Q118; these read TCNR and EPQ. The active-site Nucleophile is the C50. 187–192 lines the NADP(+) pocket; it reads GAGETI.

This sequence belongs to the glutamyl-tRNA reductase family. As to quaternary structure, homodimer.

It catalyses the reaction (S)-4-amino-5-oxopentanoate + tRNA(Glu) + NADP(+) = L-glutamyl-tRNA(Glu) + NADPH + H(+). It functions in the pathway porphyrin-containing compound metabolism; protoporphyrin-IX biosynthesis; 5-aminolevulinate from L-glutamyl-tRNA(Glu): step 1/2. Functionally, catalyzes the NADPH-dependent reduction of glutamyl-tRNA(Glu) to glutamate 1-semialdehyde (GSA). In Vibrio parahaemolyticus serotype O3:K6 (strain RIMD 2210633), this protein is Glutamyl-tRNA reductase.